The sequence spans 487 residues: 3-octaprenyl-4-hydroxybenzoate carboxy-lyase (487 aa).

N172 contacts Mn(2+). Residues 175-177 (IYR), 189-191 (RWL), and 194-195 (RG) contribute to the prenylated FMN site. E238 contributes to the Mn(2+) binding site. The Proton donor role is filled by D287.

It belongs to the UbiD family. Homohexamer. Prenylated FMN is required as a cofactor. Mn(2+) serves as cofactor.

The protein resides in the cell membrane. The catalysed reaction is a 4-hydroxy-3-(all-trans-polyprenyl)benzoate + H(+) = a 2-(all-trans-polyprenyl)phenol + CO2. It functions in the pathway cofactor biosynthesis; ubiquinone biosynthesis. Functionally, catalyzes the decarboxylation of 3-octaprenyl-4-hydroxy benzoate to 2-octaprenylphenol, an intermediate step in ubiquinone biosynthesis. In Nitrosomonas europaea (strain ATCC 19718 / CIP 103999 / KCTC 2705 / NBRC 14298), this protein is 3-octaprenyl-4-hydroxybenzoate carboxy-lyase.